The chain runs to 199 residues: MGYLVPTVIEQSSRGERAYDIYSRLLKDRIIMLTGPVEDGMANSIIAQLLFLDAQDNTKDIYLYVNTPGGSVSAGLAIVDTMNFIKSDVLTIVMGMAASMGTIIASSGTKGKRFMLPNAEYLIHQPMGGAGQGTQQTDMAIVAEQLLKTRKRLEQILADNSNRSLEQIHKDAERDHWMDAKETLEYGFIDEIMENNSLK.

Serine 99 acts as the Nucleophile in catalysis. The active site involves histidine 124.

It belongs to the peptidase S14 family. Fourteen ClpP subunits assemble into 2 heptameric rings which stack back to back to give a disk-like structure with a central cavity, resembling the structure of eukaryotic proteasomes.

It is found in the cytoplasm. The catalysed reaction is Hydrolysis of proteins to small peptides in the presence of ATP and magnesium. alpha-casein is the usual test substrate. In the absence of ATP, only oligopeptides shorter than five residues are hydrolyzed (such as succinyl-Leu-Tyr-|-NHMec, and Leu-Tyr-Leu-|-Tyr-Trp, in which cleavage of the -Tyr-|-Leu- and -Tyr-|-Trp bonds also occurs).. Its function is as follows. Cleaves peptides in various proteins in a process that requires ATP hydrolysis. Has a chymotrypsin-like activity. Plays a major role in the degradation of misfolded proteins. This Lactococcus lactis subsp. cremoris (strain SK11) protein is ATP-dependent Clp protease proteolytic subunit.